A 572-amino-acid chain; its full sequence is MALTIPRSQYVATYGPTVGDKVRLGDTDLWATIEQDFLTKGDECKFGGGKSVRDGMAQSSTSTRDNPNVLDFALTNVMIIDAKLGIIKADIGIRDGRIVGIGQAGNPDTMDNVTPNMIIGASTEVHNGAHLIATAGGIDTHIHWICPQQAQHAIENGITTMIGGGSGPADGTHATTCTPGKFNIERMFQACEALPVNIGFFGKGNCSMLEPLKEQVVAGALGLKIHEDWGATPAVIDAALKVADEMDVQVAIHTDTLNESGFLEDTMKAINGRVIHTFHTEGAGGGHAPDIIKAAMYPNVLPASTNPTRPFTVNTIDEHLDMLMVCHHLDKRVPEDVAFADSRIRPETIAAEDILHDMGVFSIMSSDSQAMGRVGEVVTRTWQTADKMKAQRGALGDEGNDNFRIKRYIAKYTINPAIAHGISQYVGSLEVGKLADIVLWKPQFFGVKPEFVMKKGFISFAKMGDPNASIPTPQPVFYRPMFGANAKANTESAVYFVSQASVDANIKAQYGIQKETLAVKGCRDVGKKDLVHNNATPEITVDPERYEVRVDGEHITCEPATKVPLAQRYFLF.

Residues 136-572 (GGIDTHIHWI…VPLAQRYFLF (437 aa)) form the Urease domain. Ni(2+)-binding residues include His-141, His-143, and Lys-224. Lys-224 is modified (N6-carboxylysine). His-226 is a binding site for substrate. Residues His-253 and His-279 each contribute to the Ni(2+) site. The active-site Proton donor is the His-327. Ni(2+) is bound at residue Asp-367.

This sequence belongs to the metallo-dependent hydrolases superfamily. Urease alpha subunit family. In terms of assembly, heterotrimer of UreA (gamma), UreB (beta) and UreC (alpha) subunits. Three heterotrimers associate to form the active enzyme. Requires Ni cation as cofactor. Post-translationally, carboxylation allows a single lysine to coordinate two nickel ions.

Its subcellular location is the cytoplasm. It catalyses the reaction urea + 2 H2O + H(+) = hydrogencarbonate + 2 NH4(+). The protein operates within nitrogen metabolism; urea degradation; CO(2) and NH(3) from urea (urease route): step 1/1. This Actinobacillus pleuropneumoniae serotype 5b (strain L20) protein is Urease subunit alpha.